A 185-amino-acid polypeptide reads, in one-letter code: Ribosome-recycling factor (185 aa).

The protein belongs to the RRF family.

The protein localises to the cytoplasm. In terms of biological role, responsible for the release of ribosomes from messenger RNA at the termination of protein biosynthesis. May increase the efficiency of translation by recycling ribosomes from one round of translation to another. This Campylobacter fetus subsp. fetus (strain 82-40) protein is Ribosome-recycling factor.